Here is a 418-residue protein sequence, read N- to C-terminus: Histidine--tRNA ligase (418 aa).

Belongs to the class-II aminoacyl-tRNA synthetase family. In terms of assembly, homodimer.

The protein localises to the cytoplasm. The enzyme catalyses tRNA(His) + L-histidine + ATP = L-histidyl-tRNA(His) + AMP + diphosphate + H(+). In Dehalococcoides mccartyi (strain ATCC BAA-2266 / KCTC 15142 / 195) (Dehalococcoides ethenogenes (strain 195)), this protein is Histidine--tRNA ligase.